The primary structure comprises 302 residues: Probable alpha-L-glutamate ligase (302 aa).

The ATP-grasp domain maps to 112 to 294; it reads LQLLLKTGVP…IAAEIIDYIE (183 aa). Residues K148, 185-186, D194, and 218-220 contribute to the ATP site; these read DF and RAN. Positions 255, 267, and 269 each coordinate Mg(2+). Mn(2+) contacts are provided by D255, E267, and N269.

It belongs to the RimK family. Requires Mg(2+) as cofactor. The cofactor is Mn(2+).

The protein is Probable alpha-L-glutamate ligase of Haemophilus influenzae (strain 86-028NP).